We begin with the raw amino-acid sequence, 309 residues long: NADH-cytochrome b5 reductase 1 (309 aa).

A helical transmembrane segment spans residues 30–50 (FVPYAVALTAILAGLKLFTGG). The FAD-binding FR-type domain maps to 60-165 (TEFQEFVLKE…RGPKGAMVYT (106 aa)). FAD contacts are provided by residues 145–160 (TTLK…GPKG) and 171–208 (HIGM…KLDL).

The protein belongs to the flavoprotein pyridine nucleotide cytochrome reductase family. Monomer. Component of the 2-(3-amino-3-carboxypropyl)histidine synthase complex composed of dph1, dph2, dph3 and a NADH-dependent reductase, predominantly cbr1. FAD is required as a cofactor.

The protein resides in the mitochondrion outer membrane. It carries out the reaction 2 Fe(III)-[cytochrome b5] + NADH = 2 Fe(II)-[cytochrome b5] + NAD(+) + H(+). The enzyme catalyses 2 Fe(3+)-[Dph3] + NADH = 2 Fe(2+)-[Dph3] + NAD(+) + H(+). Its pathway is protein modification; peptidyl-diphthamide biosynthesis. NADH-dependent reductase for dph3 and cytochrome b5. Required for the first step of diphthamide biosynthesis, a post-translational modification of histidine which occurs in elongation factor 2. Dph1 and dph2 transfer a 3-amino-3-carboxypropyl (ACP) group from S-adenosyl-L-methionine (SAM) to a histidine residue, the reaction is assisted by a reduction system comprising dph3 and a NADH-dependent reductase, predominantly cbr1. By reducing dph3, also involved in the formation of the tRNA wobble base modification mcm5s 2U (5-methoxycarbonylmethyl-2-thiouridine), mediated by the elongator complex. The cytochrome b5/NADH cytochrome b5 reductase electron transfer system supports the catalytic activity of several sterol biosynthetic enzymes. The chain is NADH-cytochrome b5 reductase 1 (cbr1) from Neosartorya fischeri (strain ATCC 1020 / DSM 3700 / CBS 544.65 / FGSC A1164 / JCM 1740 / NRRL 181 / WB 181) (Aspergillus fischerianus).